The following is a 551-amino-acid chain: Formate--tetrahydrofolate ligase (551 aa).

Thr-54–Thr-61 lines the ATP pocket.

The protein belongs to the formate--tetrahydrofolate ligase family.

The enzyme catalyses (6S)-5,6,7,8-tetrahydrofolate + formate + ATP = (6R)-10-formyltetrahydrofolate + ADP + phosphate. It participates in one-carbon metabolism; tetrahydrofolate interconversion. The chain is Formate--tetrahydrofolate ligase from Myxococcus xanthus (strain DK1622).